A 305-amino-acid polypeptide reads, in one-letter code: tRNA pseudouridine synthase B (305 aa).

The active-site Nucleophile is Asp-39.

This sequence belongs to the pseudouridine synthase TruB family. Type 1 subfamily.

The catalysed reaction is uridine(55) in tRNA = pseudouridine(55) in tRNA. Responsible for synthesis of pseudouridine from uracil-55 in the psi GC loop of transfer RNAs. The chain is tRNA pseudouridine synthase B from Staphylococcus aureus (strain Newman).